Consider the following 444-residue polypeptide: Glutamate--tRNA ligase 1 (444 aa).

A 'HIGH' region motif is present at residues 8-18; the sequence is PSPTGFLHVGN. The 'KMSKS' region motif lies at 239 to 243; the sequence is KISKR. Lysine 242 provides a ligand contact to ATP.

This sequence belongs to the class-I aminoacyl-tRNA synthetase family. Glutamate--tRNA ligase type 1 subfamily. In terms of assembly, monomer.

The protein resides in the cytoplasm. The catalysed reaction is tRNA(Glu) + L-glutamate + ATP = L-glutamyl-tRNA(Glu) + AMP + diphosphate. In terms of biological role, catalyzes the attachment of glutamate to tRNA(Glu) in a two-step reaction: glutamate is first activated by ATP to form Glu-AMP and then transferred to the acceptor end of tRNA(Glu). This is Glutamate--tRNA ligase 1 from Zymomonas mobilis subsp. mobilis (strain ATCC 31821 / ZM4 / CP4).